A 226-amino-acid chain; its full sequence is ATP synthase subunit a (226 aa).

A run of 6 helical transmembrane segments spans residues 18–38, 79–99, 105–125, 134–154, 179–199, and 201–221; these read FITGFFVVLTAVLMFLISLGA, LAGTIALYVFFSNMIGIIPGF, SWSFTLVLALIVFFYYHFEGI, FAHFAGPVKWLAPFMFPIEII, LIMLLLVPWAVPVAPFMVLFF, and GILQAFVFMILTYVYLAGAVL.

It belongs to the ATPase A chain family. In terms of assembly, F-type ATPases have 2 components, CF(1) - the catalytic core - and CF(0) - the membrane proton channel. CF(1) has five subunits: alpha(3), beta(3), gamma(1), delta(1), epsilon(1). CF(0) has three main subunits: a(1), b(2) and c(9-12). The alpha and beta chains form an alternating ring which encloses part of the gamma chain. CF(1) is attached to CF(0) by a central stalk formed by the gamma and epsilon chains, while a peripheral stalk is formed by the delta and b chains.

It is found in the cell inner membrane. Key component of the proton channel; it plays a direct role in the translocation of protons across the membrane. This chain is ATP synthase subunit a, found in Helicobacter pylori (strain HPAG1).